Here is a 347-residue protein sequence, read N- to C-terminus: NADH-ubiquinone oxidoreductase chain 2 (347 aa).

Helical transmembrane passes span 13-33, 55-75, 96-116, 123-143, 149-169, 178-198, 201-221, 247-267, 274-294, and 326-346; these read IFAG…WVGL, AAIK…MAIL, LMIM…FWVP, PLMS…SIMY, LNVN…SWGG, ILAY…PYNP, TILN…LLNL, TLLS…WVII, NSLI…YFYL, and LPTL…MLMI.

This sequence belongs to the complex I subunit 2 family. Core subunit of respiratory chain NADH dehydrogenase (Complex I) which is composed of 45 different subunits. Interacts with TMEM242.

The protein localises to the mitochondrion inner membrane. It catalyses the reaction a ubiquinone + NADH + 5 H(+)(in) = a ubiquinol + NAD(+) + 4 H(+)(out). Core subunit of the mitochondrial membrane respiratory chain NADH dehydrogenase (Complex I) which catalyzes electron transfer from NADH through the respiratory chain, using ubiquinone as an electron acceptor. Essential for the catalytic activity and assembly of complex I. The protein is NADH-ubiquinone oxidoreductase chain 2 of Pan paniscus (Pygmy chimpanzee).